Consider the following 238-residue polypeptide: Ribonuclease PH (238 aa).

Phosphate-binding positions include arginine 86 and 124–126 (GTR).

This sequence belongs to the RNase PH family. As to quaternary structure, homohexameric ring arranged as a trimer of dimers.

It catalyses the reaction tRNA(n+1) + phosphate = tRNA(n) + a ribonucleoside 5'-diphosphate. Functionally, phosphorolytic 3'-5' exoribonuclease that plays an important role in tRNA 3'-end maturation. Removes nucleotide residues following the 3'-CCA terminus of tRNAs; can also add nucleotides to the ends of RNA molecules by using nucleoside diphosphates as substrates, but this may not be physiologically important. Probably plays a role in initiation of 16S rRNA degradation (leading to ribosome degradation) during starvation. The chain is Ribonuclease PH from Geotalea uraniireducens (strain Rf4) (Geobacter uraniireducens).